The primary structure comprises 191 residues: Large ribosomal subunit protein uL22 (191 aa).

Residues 159–168 are compositionally biased toward basic and acidic residues; sequence VPKGEDDTAQ. The segment at 159-191 is disordered; the sequence is VPKGEDDTAQKKKVSQKKLKKQKLKAALSGGAD. Over residues 169–182 the composition is skewed to basic residues; it reads KKKVSQKKLKKQKL.

This sequence belongs to the universal ribosomal protein uL22 family.

This Suberites domuncula (Sponge) protein is Large ribosomal subunit protein uL22 (RPL17).